We begin with the raw amino-acid sequence, 625 residues long: Keratin, type II cytoskeletal 1 (625 aa).

Positions 1–12 (MSFQCSSRSLCR) are enriched in low complexity. Positions 1-27 (MSFQCSSRSLCRSGGGGGGRNFSSGSA) are disordered. The tract at residues 1–178 (MSFQCSSRSL…DPQIQKVKSQ (178 aa)) is head. Arginine 12 is modified (omega-N-methylarginine). 2 positions are modified to phosphoserine: serine 23 and serine 26. Arginine 51 carries the omega-N-methylarginine modification. Serine 69 is subject to Phosphoserine. Residues 171–319 (QIQKVKSQER…DIDFFSTLYQ (149 aa)) adopt a coiled-coil conformation. The interval 179-214 (EREQIKSLNDKFASFIDKVRFLEQQNQVLQTKWELL) is coil 1A. The region spanning 179–492 (EREQIKSLND…KLLEGEEIRM (314 aa)) is the IF rod domain. The interval 215 to 233 (QQVDTSTRTQNLDPFFESY) is linker 1. A coil 1B region spans residues 234 to 325 (ISNLRRQVDS…TLYQMELSQM (92 aa)). At lysine 275 the chain carries N6,N6-dimethyllysine. Residues 326-349 (QTQISETNVVLSMDNNRTLDLDGI) form a linker 12 region. A coil 2 region spans residues 350–488 (IAEVKAQYDS…ATYRKLLEGE (139 aa)). Residues 388–475 (DSVKNTKMEI…ELMNTKLALD (88 aa)) adopt a coiled-coil conformation. The tail stretch occupies residues 489–625 (EIRMSGECTP…VSTTYSRGTN (137 aa)). Disordered stretches follow at residues 496–525 (CTPNVSVSVSTSHTSMSGTSSRGGGRYGSG) and 560–625 (SGGG…RGTN). The segment covering 500 to 515 (VSVSVSTSHTSMSGTS) has biased composition (low complexity). 2 stretches are compositionally biased toward gly residues: residues 516 to 525 (SRGGGRYGSG) and 560 to 606 (SGGG…GGVK). An omega-N-methylarginine mark is found at arginine 517, arginine 574, and arginine 596. A compositionally biased stretch (polar residues) spans 613–625 (VKFVSTTYSRGTN).

Belongs to the intermediate filament family. In terms of assembly, heterotetramer of two type I and two type II keratins. Heterodimer with KRT10. Two heterodimers of KRT1 and KRT10 form a heterotetramer. Forms a heterodimer with KRT14; the interaction is more abundant in the absence of KRT5. Interacts with ITGB1 in the presence of RACK1 and SRC, and with RACK1. Interacts with C1QBP; the association represents a cell surface kininogen receptor. Interacts with EPPK1; interaction is dependent of higher-order structure of intermediate filament. Undergoes deimination of some arginine residues (citrullination).

The protein resides in the cell membrane. Its subcellular location is the cytoplasm. Functionally, may regulate the activity of kinases such as PKC and SRC via binding to integrin beta-1 (ITB1) and the receptor of activated protein C kinase 1 (RACK1). In complex with C1QBP is a high affinity receptor for kininogen-1/HMWK. This is Keratin, type II cytoskeletal 1 from Rattus norvegicus (Rat).